We begin with the raw amino-acid sequence, 389 residues long: Phosphoglycerate kinase (389 aa).

Substrate-binding positions include 21-23, arginine 36, 59-62, arginine 112, and arginine 145; these read DLN and HLGR. ATP is bound by residues lysine 196, glutamate 313, and 342 to 345; that span reads GGDT.

This sequence belongs to the phosphoglycerate kinase family. In terms of assembly, monomer.

The protein resides in the cytoplasm. The enzyme catalyses (2R)-3-phosphoglycerate + ATP = (2R)-3-phospho-glyceroyl phosphate + ADP. It functions in the pathway carbohydrate degradation; glycolysis; pyruvate from D-glyceraldehyde 3-phosphate: step 2/5. This chain is Phosphoglycerate kinase, found in Mannheimia succiniciproducens (strain KCTC 0769BP / MBEL55E).